The chain runs to 270 residues: Sulfur carrier protein FdhD (270 aa).

C108 serves as the catalytic Cysteine persulfide intermediate. Residue F247–R252 coordinates Mo-bis(molybdopterin guanine dinucleotide).

It belongs to the FdhD family.

The protein localises to the cytoplasm. Its function is as follows. Required for formate dehydrogenase (FDH) activity. Acts as a sulfur carrier protein that transfers sulfur from IscS to the molybdenum cofactor prior to its insertion into FDH. The protein is Sulfur carrier protein FdhD of Halalkalibacterium halodurans (strain ATCC BAA-125 / DSM 18197 / FERM 7344 / JCM 9153 / C-125) (Bacillus halodurans).